A 61-amino-acid chain; its full sequence is Small ribosomal subunit protein uS14B (61 aa).

The Zn(2+) site is built by Cys24, Cys27, Cys40, and Cys43.

It belongs to the universal ribosomal protein uS14 family. Zinc-binding uS14 subfamily. As to quaternary structure, part of the 30S ribosomal subunit. Contacts proteins S3 and S10. Requires Zn(2+) as cofactor.

Its function is as follows. Binds 16S rRNA, required for the assembly of 30S particles and may also be responsible for determining the conformation of the 16S rRNA at the A site. The protein is Small ribosomal subunit protein uS14B of Streptococcus pyogenes serotype M6 (strain ATCC BAA-946 / MGAS10394).